Here is a 459-residue protein sequence, read N- to C-terminus: O-phospho-L-seryl-tRNA:Cys-tRNA synthase 1 (459 aa).

Residues 152-153, Asn257, and 280-282 contribute to the pyridoxal 5'-phosphate site; these read AR and SGH. At Lys283 the chain carries N6-(pyridoxal phosphate)lysine.

It belongs to the SepCysS family. In terms of assembly, homodimer. Interacts with SepRS. The cofactor is pyridoxal 5'-phosphate.

It catalyses the reaction O-phospho-L-seryl-tRNA(Cys) + hydrogen sulfide + H(+) = L-cysteinyl-tRNA(Cys) + phosphate. In terms of biological role, converts O-phospho-L-seryl-tRNA(Cys) (Sep-tRNA(Cys)) to L-cysteinyl-tRNA(Cys) (Cys-tRNA(Cys)). The protein is O-phospho-L-seryl-tRNA:Cys-tRNA synthase 1 of Methanococcoides burtonii (strain DSM 6242 / NBRC 107633 / OCM 468 / ACE-M).